The chain runs to 595 residues: uncharacterized protein (595 aa).

A disordered region spans residues 1–21 (MSSQLKSTWAPVPSTKPSQPC). WD repeat units follow at residues 56 to 95 (EHTAPTTVARFSPSGYYVASGDNQGNVRIWDCAGEDKILK), 100 to 143 (AISG…GEIF), 144 to 184 (GHSS…FNRS), 187 to 226 (VHSKFVYDVRYSPNDERFASAGADGKVYVFDGKTGDQVYE), 229 to 268 (AHKGSIFSISWSPDSSQFVTSSAGYSCKIWDANTGSLIRE), 313 to 352 (GHQRSITAATLSPDATHFYTASYDGTVLSWDIGKQKAFPL), 356 to 393 (SHTNQVMQMIMADDHVITIGMDDTLRVIDIKQGCFAKD), 433 to 472 (KTIYQPSAVASHPLKSEFCVGGEDCCVYIHTLEKGELCEV), 477 to 516 (DSTAPITCLAYSPDGKYLACGDASGKVVLYDANSREVITS), 520 to 559 (FHTGRILGMSWNAKSTHLATASLDTNIHIYSVERPMKYIA), and 564 to 594 (HSLGATQVEWVSENELLSTGSDAAIKVWSVT).

The protein belongs to the WD repeat AIP1 family.

This is an uncharacterized protein from Schizosaccharomyces pombe (strain 972 / ATCC 24843) (Fission yeast).